The sequence spans 561 residues: MQIQSFYHSASLKTQEAFKSLQKTLYNGMQILSGQGKAPAKAPDARPEIIVLREPGATWGNYLQHQKTSNHSLHNLYNLRRDLLTVGATVLGKQDPVLTSMANQMELAKVKADRPATKQEEAAAKALKKNLIELIAARTQQQDGLPAKEAHRFAAVAFRDAQDKQLNNQPWQTIKNTLTHNGHHYTNTQLPAAEMKIGAKDIFPSAYEGKGVCSWDTKNIHHANNLWMSTVSVHEDGKDKTLFCGIRHGVLSPYHEKDPLLRQVGAENKAKEVLTAALFSKPELLNKALAGEAVSLKLVSVGLLTASNIFGKEGTMVEDQMRAWQSLTQPGKMIHLKIRNKDGDLQTVKIKPDVAAFNVGVNELALKLGFGLKASDSYNAEALYQLLGNDLRPEARPGGWVGEWLAQYPDNYEVVNTLARQIKDIWKNNQHHKDGGEPYKLAQRLAMLAHEIDAVPAWNCKSGKDRTGMMDSEIKREIISLHQTHMLSAPGSLPDSGGQKIFQKVLLNSGNPGDSEPNTGGAGNKVMKNLSPEVLNLSYQKRVGDENIWQSVKGISSLITS.

Residue cysteine 460 is part of the active site. The CX5R motif signature appears at 460–466 (CKSGKDR).

It belongs to the phosphatase IpgD/SopB family.

Its subcellular location is the secreted. Functionally, converts phosphatidylinositol 3,4,5-trisphosphate (PtdIns 3,4,5-P3) to PtdIns 3-P and prevents the transition of PtdIns 3-P to PtdIns 3,5-P2. It is one of the known effectors injected by Salmonella into the host cell and is required for invasion and for an efficient generation and maintenance of Salmonella-containing vacuole (SVC). Alteration of the phosphoinositide composition of the plasma membrane causes membrane ruffling and actin cytoskeleton rearrangements. The persistence of PtdIns 3-P diverts the SCV from the endocytic pathway resulting in enlarged vesicles, which are essential to create a favorable environment where Salmonella can replicate and avoid immune defenses of the host cells. This chain is Inositol phosphate phosphatase SopB (sopB), found in Salmonella dublin.